The primary structure comprises 275 residues: 3-methyl-2-oxobutanoate hydroxymethyltransferase (275 aa).

Positions 44 and 83 each coordinate Mg(2+). 3-methyl-2-oxobutanoate is bound by residues 44 to 45, Asp-83, and Lys-113; that span reads DS. Mg(2+) is bound at residue Glu-115. Glu-182 serves as the catalytic Proton acceptor.

It belongs to the PanB family. As to quaternary structure, homodecamer; pentamer of dimers. Mg(2+) is required as a cofactor.

It localises to the cytoplasm. It carries out the reaction 3-methyl-2-oxobutanoate + (6R)-5,10-methylene-5,6,7,8-tetrahydrofolate + H2O = 2-dehydropantoate + (6S)-5,6,7,8-tetrahydrofolate. It functions in the pathway cofactor biosynthesis; (R)-pantothenate biosynthesis; (R)-pantoate from 3-methyl-2-oxobutanoate: step 1/2. Functionally, catalyzes the reversible reaction in which hydroxymethyl group from 5,10-methylenetetrahydrofolate is transferred onto alpha-ketoisovalerate to form ketopantoate. The protein is 3-methyl-2-oxobutanoate hydroxymethyltransferase of Clostridium novyi (strain NT).